The primary structure comprises 80 residues: U-actitoxin-Avd9a (80 aa).

The signal sequence occupies residues 1-20 (MNLKVLAVFVLCAILVVVTA). A propeptide spanning residues 21–39 (ERRGTETGVYKKDTLQDLI) is cleaved from the precursor. The ShKT domain maps to 45–80 (CIDRFPTGTCKQVKKGGSCKNSDKYRMNCRKTCGLC). 3 cysteine pairs are disulfide-bonded: C45–C80, C54–C73, and C63–C77. The segment at 68 to 69 (KY) is crucial for binding to potassium channels.

The protein belongs to the sea anemone type 1 potassium channel toxin family. Type 1b subfamily.

The protein localises to the secreted. Its subcellular location is the nematocyst. Its function is as follows. Inhibits voltage-gated potassium channels (Kv1/KCNA). The chain is U-actitoxin-Avd9a from Anemonia viridis (Snakelocks anemone).